A 342-amino-acid polypeptide reads, in one-letter code: Uroporphyrinogen decarboxylase (342 aa).

Substrate-binding positions include 22–26 (RQAGR), Phe-42, Asp-72, Tyr-146, Ser-201, and His-317.

The protein belongs to the uroporphyrinogen decarboxylase family. Homodimer.

It localises to the cytoplasm. It carries out the reaction uroporphyrinogen III + 4 H(+) = coproporphyrinogen III + 4 CO2. Its pathway is porphyrin-containing compound metabolism; protoporphyrin-IX biosynthesis; coproporphyrinogen-III from 5-aminolevulinate: step 4/4. In terms of biological role, catalyzes the decarboxylation of four acetate groups of uroporphyrinogen-III to yield coproporphyrinogen-III. The sequence is that of Uroporphyrinogen decarboxylase from Orientia tsutsugamushi (strain Ikeda) (Rickettsia tsutsugamushi).